Reading from the N-terminus, the 129-residue chain is MEHPSTNYTPEQQHEKLKHYVLIPKHLWSYIKYGTHVRYYTTQNVFRVGGFVLQNPYEAVIKNEVKMAIRLQNSFNTKAKGYVTWTVAYNDISKLYAKPDAIMLTIQENVEKALHALNQNVLTLASKIR.

This sequence belongs to the asfivirus C129R family.

The protein localises to the virion. Its function is as follows. Plays a role in the inhibition of type I interferon signaling pathway. Mechanistically, specifically interacts with 2',3'-cGAMP and cleaves it via its phosphodiesterase activity. In turn, prevents 2',3'-cGAMP interaction with host ER-resident STING1 leading to inhibition of downstream signaling pathway and type I interferon production. This is an uncharacterized protein from Ornithodoros (relapsing fever ticks).